The following is a 202-amino-acid chain: Transmembrane protein 223 (202 aa).

At 1 to 43 (MAAPGRRWSVLLFRALQSLSARRALHDTAPPRDVLLFEHERGR) the chain is on the mitochondrial matrix side. The helical transmembrane segment at 44–64 (FFAVLGLFCAGQGVFWASLAI) threads the bilayer. Residues 65-97 (ASLARPPTPVRPTDAKTPDHGGLDLRSTLWRYG) are Mitochondrial intermembrane-facing. Residues 98–118 (LAVGCGAIGSLVLGAGLLFSL) form a helical membrane-spanning segment. Topologically, residues 119–202 (RSVRSVMLRA…DNTVGAYRSL (84 aa)) are mitochondrial matrix.

The protein belongs to the TMEM223 family. Associates with the mitochondrial ribosome.

It is found in the mitochondrion inner membrane. In terms of biological role, mitochondrial ribosome-associated protein involved in the first steps of cytochrome c oxidase complex (complex IV) biogenesis. Stimulates the translation of MT-CO1 mRNA and is a constituent of early MT-CO1 assembly intermediates. The polypeptide is Transmembrane protein 223 (Bos taurus (Bovine)).